The following is a 415-amino-acid chain: Arginine biosynthesis bifunctional protein ArgJ (415 aa).

Substrate is bound by residues threonine 156, lysine 182, threonine 193, glutamate 279, asparagine 410, and threonine 415. The active-site Nucleophile is threonine 193.

Belongs to the ArgJ family. As to quaternary structure, heterotetramer of two alpha and two beta chains.

It is found in the cytoplasm. The catalysed reaction is N(2)-acetyl-L-ornithine + L-glutamate = N-acetyl-L-glutamate + L-ornithine. The enzyme catalyses L-glutamate + acetyl-CoA = N-acetyl-L-glutamate + CoA + H(+). Its pathway is amino-acid biosynthesis; L-arginine biosynthesis; L-ornithine and N-acetyl-L-glutamate from L-glutamate and N(2)-acetyl-L-ornithine (cyclic): step 1/1. The protein operates within amino-acid biosynthesis; L-arginine biosynthesis; N(2)-acetyl-L-ornithine from L-glutamate: step 1/4. Functionally, catalyzes two activities which are involved in the cyclic version of arginine biosynthesis: the synthesis of N-acetylglutamate from glutamate and acetyl-CoA as the acetyl donor, and of ornithine by transacetylation between N(2)-acetylornithine and glutamate. The sequence is that of Arginine biosynthesis bifunctional protein ArgJ from Synechococcus sp. (strain ATCC 27144 / PCC 6301 / SAUG 1402/1) (Anacystis nidulans).